Reading from the N-terminus, the 65-residue chain is Large ribosomal subunit protein bL35 (65 aa).

Composition is skewed to basic residues over residues 1–15 (MPKM…KRFT) and 26–44 (QAFK…KRQL). A disordered region spans residues 1-65 (MPKMKTKKSA…KSVRAMMPYA (65 aa)).

Belongs to the bacterial ribosomal protein bL35 family.

The sequence is that of Large ribosomal subunit protein bL35 from Cupriavidus metallidurans (strain ATCC 43123 / DSM 2839 / NBRC 102507 / CH34) (Ralstonia metallidurans).